The primary structure comprises 282 residues: High mobility group nucleosome-binding domain-containing protein 5 (282 aa).

A disordered region spans residues 1–282 (MPKRKAAGQG…GKKEEPQSIV (282 aa)). At Thr-31 the chain carries Phosphothreonine. The segment covering 37–46 (KRTSSSRKMK) has biased composition (basic residues). Lys-67 participates in a covalent cross-link: Glycyl lysine isopeptide (Lys-Gly) (interchain with G-Cter in SUMO2). Tyr-76 is subject to Phosphotyrosine. Basic and acidic residues predominate over residues 81–119 (KNGEAKITEAPASEKEIVEVKEENIEDATEKGGEKKEAV). Ser-93 is subject to Phosphoserine. Lys-101 is covalently cross-linked (Glycyl lysine isopeptide (Lys-Gly) (interchain with G-Cter in SUMO1); alternate). A Glycyl lysine isopeptide (Lys-Gly) (interchain with G-Cter in SUMO2); alternate cross-link involves residue Lys-101. A Glycyl lysine isopeptide (Lys-Gly) (interchain with G-Cter in SUMO2) cross-link involves residue Lys-124. Residues 125–138 (NEEEDQKEDEEDQN) are compositionally biased toward acidic residues. 2 stretches are compositionally biased toward basic and acidic residues: residues 139-152 (EEKG…KDEK) and 158-256 (KEDK…KEDL). Over residues 257 to 270 (KEEEEGKEEDEIKE) the composition is skewed to acidic residues. Positions 271–282 (DDGKKEEPQSIV) are enriched in basic and acidic residues.

It belongs to the HMGN family. In terms of tissue distribution, ubiquitously expressed.

Its subcellular location is the nucleus. In terms of biological role, preferentially binds to euchromatin and modulates cellular transcription by counteracting linker histone-mediated chromatin compaction. In Homo sapiens (Human), this protein is High mobility group nucleosome-binding domain-containing protein 5 (HMGN5).